Reading from the N-terminus, the 546-residue chain is Probable protein kinase UbiB (546 aa).

The Protein kinase domain occupies 124–502; it reads DFEIKPLASA…HVRQGQSRYF (379 aa). ATP is bound by residues 130-138 and Lys153; that span reads LASASIAQV. Asp288 serves as the catalytic Proton acceptor. Helical transmembrane passes span 501–521 and 522–542; these read YFLG…VSRP and EWGL…FVGW.

This sequence belongs to the ABC1 family. UbiB subfamily.

Its subcellular location is the cell inner membrane. Its pathway is cofactor biosynthesis; ubiquinone biosynthesis [regulation]. In terms of biological role, is probably a protein kinase regulator of UbiI activity which is involved in aerobic coenzyme Q (ubiquinone) biosynthesis. The chain is Probable protein kinase UbiB from Escherichia coli O127:H6 (strain E2348/69 / EPEC).